The chain runs to 664 residues: Chaperone protein DnaK (664 aa).

Thr201 carries the post-translational modification Phosphothreonine; by autocatalysis. 2 disordered regions span residues 516–538 (DAEK…NEAD) and 578–664 (APVE…KPND). Residues 578–592 (APVEKIKDASEELSR) show a composition bias toward basic and acidic residues. Low complexity-rich tracts occupy residues 600–617 (AMQS…ANAQ) and 638–649 (AGNSASSNSNNE).

This sequence belongs to the heat shock protein 70 family.

Acts as a chaperone. The chain is Chaperone protein DnaK from Chlamydia caviae (strain ATCC VR-813 / DSM 19441 / 03DC25 / GPIC) (Chlamydophila caviae).